The sequence spans 790 residues: cAMP and cAMP-inhibited cGMP 3',5'-cyclic phosphodiesterase 10A (790 aa).

3',5'-cyclic AMP contacts are provided by residues 290–291 (RC), 334–335 (IA), T368, Q387, and H519. The 318-residue stretch at 446 to 763 (TSEEWQGLMR…NQWEKVIRGE (318 aa)) folds into the PDEase domain. Residue H519 is the Proton donor of the active site. H519 contacts 3',5'-cyclic GMP. 4 residues coordinate a divalent metal cation: H523, H557, D558, and D668. Residue Q720 participates in 3',5'-cyclic AMP binding. Q720 serves as a coordination point for 3',5'-cyclic GMP. The interval 768-790 (WISGPGPAPSKSTPEKLNVKVED) is disordered. Residues 780 to 790 (TPEKLNVKVED) show a composition bias toward basic and acidic residues.

This sequence belongs to the cyclic nucleotide phosphodiesterase family. In terms of assembly, homodimer. A divalent metal cation serves as cofactor. In terms of tissue distribution, detected in striatum (at protein level). Detected in testis and brain.

Its subcellular location is the cytoplasm. The protein localises to the cytosol. The catalysed reaction is a nucleoside 3',5'-cyclic phosphate + H2O = a nucleoside 5'-phosphate + H(+). It carries out the reaction 3',5'-cyclic AMP + H2O = AMP + H(+). The enzyme catalyses 3',5'-cyclic GMP + H2O = GMP + H(+). It functions in the pathway purine metabolism; 3',5'-cyclic AMP degradation; AMP from 3',5'-cyclic AMP: step 1/1. Its pathway is purine metabolism; 3',5'-cyclic GMP degradation; GMP from 3',5'-cyclic GMP: step 1/1. Plays a role in signal transduction by regulating the intracellular concentration of cyclic nucleotides. Can hydrolyze both cAMP and cGMP, but has higher affinity for cAMP and is more efficient with cAMP as substrate. May play a critical role in regulating cAMP and cGMP levels in the striatum, a region of the brain that contributes to the control of movement and cognition. In Mus musculus (Mouse), this protein is cAMP and cAMP-inhibited cGMP 3',5'-cyclic phosphodiesterase 10A (Pde10a).